Consider the following 180-residue polypeptide: ATP synthase subunit delta (180 aa).

This sequence belongs to the ATPase delta chain family. In terms of assembly, F-type ATPases have 2 components, F(1) - the catalytic core - and F(0) - the membrane proton channel. F(1) has five subunits: alpha(3), beta(3), gamma(1), delta(1), epsilon(1). F(0) has three main subunits: a(1), b(2) and c(10-14). The alpha and beta chains form an alternating ring which encloses part of the gamma chain. F(1) is attached to F(0) by a central stalk formed by the gamma and epsilon chains, while a peripheral stalk is formed by the delta and b chains.

It localises to the cell membrane. F(1)F(0) ATP synthase produces ATP from ADP in the presence of a proton or sodium gradient. F-type ATPases consist of two structural domains, F(1) containing the extramembraneous catalytic core and F(0) containing the membrane proton channel, linked together by a central stalk and a peripheral stalk. During catalysis, ATP synthesis in the catalytic domain of F(1) is coupled via a rotary mechanism of the central stalk subunits to proton translocation. Its function is as follows. This protein is part of the stalk that links CF(0) to CF(1). It either transmits conformational changes from CF(0) to CF(1) or is implicated in proton conduction. In Ligilactobacillus salivarius (strain UCC118) (Lactobacillus salivarius), this protein is ATP synthase subunit delta.